We begin with the raw amino-acid sequence, 953 residues long: Coatomer subunit beta (953 aa).

Threonine 2 carries the N-acetylthreonine modification. 6 HEAT repeats span residues 96 to 131 (HEMI…KEAE), 132 to 168 (LLEP…NFEH), 240 to 276 (SERA…SAPT), 277 to 314 (AIKA…HPAH), 316 to 353 (RVLQ…SRNV), and 396 to 433 (DMAA…RFDN). The residue at position 494 (lysine 494) is an N6-acetyllysine.

Oligomeric complex that consists of at least the alpha, beta, beta', gamma, delta, epsilon and zeta subunits. Interacts with CAPN8. Interacts with SCYL1 and PRKCE. Interacts with COPG1. Interacts with ARF1 (myristoylated); this interaction is required for binding of COPB1 to Golgi membranes. Interacts (via trunk domain) with ARF1 (via switch I region); the interaction is direct. Interacts with KCNK2 (via N-terminus); this interaction increases the channel-mediated whole cell currents and promotes plasma membrane expression of KCNK2. Interacts with STX17. Interacts with TMEM115. Interacts with TMEM41B. In terms of processing, proteolytically cleaved between Ser-528 and Ser-529 by CAPN8. In terms of tissue distribution, predominantly expressed in the upper one-third of the oxyntic mucosa and in most regions of the pyloric mucosa. Ubiquitously expressed including platelet, liver, heart, spleen, lung and kidney.

The protein resides in the cytoplasm. Its subcellular location is the golgi apparatus membrane. The protein localises to the cytoplasmic vesicle. It localises to the COPI-coated vesicle membrane. It is found in the cell membrane. The protein resides in the endoplasmic reticulum-Golgi intermediate compartment. The coatomer is a cytosolic protein complex that binds to dilysine motifs and reversibly associates with Golgi non-clathrin-coated vesicles, which further mediate biosynthetic protein transport from the ER, via the Golgi up to the trans Golgi network. Coatomer complex is required for budding from Golgi membranes, and is essential for the retrograde Golgi-to-ER transport of dilysine-tagged proteins. In mammals, the coatomer can only be recruited by membranes associated to ADP-ribosylation factors (ARFs), which are small GTP-binding proteins; the complex also influences the Golgi structural integrity, as well as the processing, activity, and endocytic recycling of LDL receptors. Involved in the Golgi disassembly and reassembly processes during cell cycle. Involved in autophagy by playing a role in early endosome function. Plays a role in organellar compartmentalization of secretory compartments including endoplasmic reticulum (ER)-Golgi intermediate compartment (ERGIC), Golgi, trans-Golgi network (TGN) and recycling endosomes, and in biosynthetic transport of CAV1. Plays a functional role in facilitating the transport of kappa-type opioid receptor mRNAs into axons and enhances translation of these proteins in cortical neurons. Required for limiting lipid storage in lipid droplets. Involved in lipid homeostasis by regulating the presence of perilipin family members PLIN2 and PLIN3 at the lipid droplet surface and promoting the association of adipocyte triglyceride lipase (PNPLA2) with the lipid droplet surface to mediate lipolysis. This is Coatomer subunit beta (Copb1) from Mus musculus (Mouse).